A 163-amino-acid chain; its full sequence is Protein-export protein SecB (163 aa).

Belongs to the SecB family. Homotetramer, a dimer of dimers. One homotetramer interacts with 1 SecA dimer.

The protein localises to the cytoplasm. Functionally, one of the proteins required for the normal export of preproteins out of the cell cytoplasm. It is a molecular chaperone that binds to a subset of precursor proteins, maintaining them in a translocation-competent state. It also specifically binds to its receptor SecA. The sequence is that of Protein-export protein SecB from Burkholderia cenocepacia (strain ATCC BAA-245 / DSM 16553 / LMG 16656 / NCTC 13227 / J2315 / CF5610) (Burkholderia cepacia (strain J2315)).